The following is a 339-amino-acid chain: tRNA-dihydrouridine(20/20a) synthase (339 aa).

FMN is bound by residues 26-28 and Gln-78; that span reads PML. Catalysis depends on Cys-108, which acts as the Proton donor. Residues Lys-147, His-180, 220 to 222, and 242 to 243 contribute to the FMN site; these read NGG and GR.

Belongs to the Dus family. DusA subfamily. FMN serves as cofactor.

It carries out the reaction 5,6-dihydrouridine(20) in tRNA + NADP(+) = uridine(20) in tRNA + NADPH + H(+). It catalyses the reaction 5,6-dihydrouridine(20) in tRNA + NAD(+) = uridine(20) in tRNA + NADH + H(+). The catalysed reaction is 5,6-dihydrouridine(20a) in tRNA + NADP(+) = uridine(20a) in tRNA + NADPH + H(+). The enzyme catalyses 5,6-dihydrouridine(20a) in tRNA + NAD(+) = uridine(20a) in tRNA + NADH + H(+). In terms of biological role, catalyzes the synthesis of 5,6-dihydrouridine (D), a modified base found in the D-loop of most tRNAs, via the reduction of the C5-C6 double bond in target uridines. Specifically modifies U20 and U20a in tRNAs. This Shigella flexneri protein is tRNA-dihydrouridine(20/20a) synthase.